We begin with the raw amino-acid sequence, 67 residues long: Alpha-conotoxin G1.5 (67 aa).

Positions 1-21 (MGMRMMFTVFLLVALATTVVS) are cleaved as a signal peptide. Positions 22 to 47 (FTSDRASDRRNAAVKAFDLISSTVKK) are excised as a propeptide. Intrachain disulfides connect Cys-49/Cys-55 and Cys-50/Cys-63. Gln-65 is modified (glutamine amide).

It belongs to the conotoxin A superfamily. As to expression, expressed by the venom duct.

The protein localises to the secreted. Its function is as follows. Alpha-conotoxins act on postsynaptic membranes, they bind to the nicotinic acetylcholine receptors (nAChR) and thus inhibit them. Globular isomer (C1-C3; C2-C4) selectively inhibits neuronal (non-muscle) nAChR subtypes particularly human alpha-3-beta-2/CHRNA3-CHRNB2 (IC(50)=35.7 nM) and alpha-9-alpha-10/CHRNA9-CHRNA10 nAChRs (IC(50)=569 nM), while the ribbon isomer (C1-C4; C2-C3) shows weak inhibition on alpha-3-beta-2/CHRNA3-CHRNB2, but not on all other receptors tested. This is Alpha-conotoxin G1.5 from Conus geographus (Geography cone).